The following is a 163-amino-acid chain: uncharacterized protein (163 aa).

The segment at 128-163 (PKKEKIKKAKRKKKGAKRASKKQKAKSKSARKSRRV) is disordered. A compositionally biased stretch (basic residues) spans 129 to 163 (KKEKIKKAKRKKKGAKRASKKQKAKSKSARKSRRV).

This is an uncharacterized protein from Sulfurisphaera tokodaii (strain DSM 16993 / JCM 10545 / NBRC 100140 / 7) (Sulfolobus tokodaii).